We begin with the raw amino-acid sequence, 461 residues long: Coagulation factor IX (461 aa).

An N-terminal signal peptide occupies residues 1–28 (MQRVNMIMAESPGLITICLLGYLLSAEC). The propeptide occupies 29 to 46 (TVFLDHENANKILNRPKR). Residues Tyr47, Asn48, Glu53, Glu54, Glu61, Glu63, Glu66, Glu67, Glu72, Glu73, and Glu76 each coordinate Ca(2+). The Gla domain maps to 47 to 92 (YNSGKLEEFVQGNLERECMEEKCSFEEAREVFENTERTTEFWKQYV). Glu53, Glu54, Glu61, Glu63, Glu66, Glu67, Glu72, Glu73, Glu76, Glu79, and Glu82 each carry 4-carboxyglutamate. Residue Glu61 coordinates Mg(2+). Cys64 and Cys69 form a disulfide bridge. Glu66 is a binding site for Mg(2+). Glu72 serves as a coordination point for Mg(2+). A Mg(2+)-binding site is contributed by Glu76. A Ca(2+)-binding site is contributed by Glu82. Position 82 (Glu82) interacts with Mg(2+). Thr85 carries an O-linked (GalNAc...) threonine glycan. The Ca(2+) site is built by Glu86, Asp93, Gly94, and Gln96. Glu86 bears the 4-carboxyglutamate mark. Residue Glu86 coordinates Mg(2+). One can recognise an EGF-like 1; calcium-binding domain in the interval 93-129 (DGDQCESNPCLNGGSCKDDINSYECWCPFGFEGKNCE). Intrachain disulfides connect Cys97-Cys108, Cys102-Cys117, Cys119-Cys128, Cys134-Cys145, Cys141-Cys155, Cys157-Cys170, Cys178-Cys335, Cys252-Cys268, Cys382-Cys396, and Cys407-Cys435. Ser99 is a glycosylation site (O-linked (Glc...) serine). O-linked (Fuc...) serine glycosylation is present at Ser107. Residues Asp110 and Asp111 each contribute to the Ca(2+) site. Asp110 carries the (3R)-3-hydroxyaspartate modification. Position 114 is a phosphoserine (Ser114). In terms of domain architecture, EGF-like 2 spans 130 to 171 (LDVTCNIKNGRCEQFCKNSADNKVVCSCTEGYRLAENQKSCE). Positions 192 to 226 (AETVFPDVDYVNSTEAETILDNITQSTQSFNDFTR) are cleaved as a propeptide — activation peptide. Tyr201 carries the post-translational modification Sulfotyrosine. Ser204 bears the Phosphoserine mark. Position 205 is a phosphothreonine; alternate (Thr205). Residue Thr205 is glycosylated (O-linked (GalNAc...) threonine; alternate). The N-linked (GlcNAc...) asparagine glycan is linked to Asn213. O-linked (GalNAc...) threonine glycans are attached at residues Thr215 and Thr225. Positions 227–459 (VVGGEDAKPG…YVNWIKEKTK (233 aa)) constitute a Peptidase S1 domain. The Charge relay system role is filled by His267. Ca(2+) contacts are provided by Glu281, Asn283, Glu286, Glu288, and Glu291. Asp315 (charge relay system) is an active-site residue. The Charge relay system role is filled by Ser411.

This sequence belongs to the peptidase S1 family. Heterodimer of a light chain and a heavy chain; disulfide-linked. Interacts (inactive and activated) with F11 (activated) in calcium-dependent manner. Interacts with SERPINC1. Activated by factor XIa, which excises the activation peptide. The propeptide can also be removed by snake venom protease. Post-translationally, the iron and 2-oxoglutarate dependent 3-hydroxylation of aspartate and asparagine is (R) stereospecific within EGF domains. Activated by coagulation factor VIIa-tissue factor (F7-F3) complex in calcium-dependent manner. In terms of processing, predominantly O-glucosylated at Ser-99 by POGLUT1 in vitro.

It is found in the secreted. The enzyme catalyses Selective cleavage of Arg-|-Ile bond in factor X to form factor Xa.. Factor IX is a vitamin K-dependent plasma protein that participates in the intrinsic pathway of blood coagulation by converting factor X to its active form in the presence of Ca(2+) ions, phospholipids, and factor VIIIa. This Pan troglodytes (Chimpanzee) protein is Coagulation factor IX (F9).